The sequence spans 347 residues: Protein RecA (347 aa).

66–73 (GPESSGKT) serves as a coordination point for ATP.

Belongs to the RecA family.

Its subcellular location is the cytoplasm. In terms of biological role, can catalyze the hydrolysis of ATP in the presence of single-stranded DNA, the ATP-dependent uptake of single-stranded DNA by duplex DNA, and the ATP-dependent hybridization of homologous single-stranded DNAs. It interacts with LexA causing its activation and leading to its autocatalytic cleavage. The sequence is that of Protein RecA from Methylococcus capsulatus (strain ATCC 33009 / NCIMB 11132 / Bath).